A 182-amino-acid polypeptide reads, in one-letter code: Putative manganese efflux pump MntP (182 aa).

6 helical membrane passes run 7–27 (IISIILLAIGLSMDGFSVSLG), 38–58 (IAYIGLTIGFLHMLMPLAGML), 71–91 (TSFAGGVLLFLIGAHMFFSAF), 106–126 (LWIIAFSVSLDSFTVGLGLGI), 131–151 (IFVTLFAFGIVSCFLTWLGML), and 159–179 (FLGVYSELLGGSILCGFGIFI).

Belongs to the MntP (TC 9.B.29) family.

It localises to the cell membrane. Its function is as follows. Probably functions as a manganese efflux pump. The protein is Putative manganese efflux pump MntP of Oceanobacillus iheyensis (strain DSM 14371 / CIP 107618 / JCM 11309 / KCTC 3954 / HTE831).